We begin with the raw amino-acid sequence, 625 residues long: MGQATSNIDPQEKRDIVQEFTKEELQTLFYHRCLSLLKPIEVAFLKQDLNGKTSVTADDLGKLFKFPENTNSFSEGTLNILYHVMKLIGKFPFINNNNLAIEETLSFEELVVSLVFFSGRYKKIFNSDYDFLKLLFISLSDRPQTKDSKTIDEKNVDPGTEKFKTNLIVALEEEDKQELRARKINWSKLDVIKDFDHTEVQQLSVNAKRLQDMTTLCLILNAIVRHNHDAIQKQLVEYSDRWREFEVYSLYLLRYLDVYLELDKLENQKISYDSFSKGINGLLPYFFQINLNRMVCDSLLSSNSPMATKPTEEHNDSTESTPQKKHTFPKFQETKVVSIPFLSYVSSMLQGIGNPTILSPSNLVKLYAGSEAGFSIRSLETKIFKWQAPTLVVVSGKRLKSKTMQTNRRYQKFDEMYPRHFLASENHLRDWQHESDRITYAVLVNQPWKSSNKNNFGDEKSIILSISPRADYFKSVHSSILQGQSIYFNNLGMGLGFGNNQPLNKNDTKRFIPGDMSLTIEANLEFAVFRHLVNSSSSNDKFFHNSQQSHISHEDYEDRFTISTIEVWGLLVSGKELEEQKKQWEWEEKQAEARQNVNIRNLGEERAFLEMAGLVGNHGAAGGSM.

The interval 305-327 (PMATKPTEEHNDSTESTPQKKHT) is disordered. Positions 335-571 (KVVSIPFLSY…ISTIEVWGLL (237 aa)) constitute a TLDc domain.

The protein belongs to the RTC5 family.

Its subcellular location is the cytoplasm. Its function is as follows. May be involved in a process influencing telomere capping. The polypeptide is Restriction of telomere capping protein 5 (RTC5) (Candida tropicalis (strain ATCC MYA-3404 / T1) (Yeast)).